Here is a 212-residue protein sequence, read N- to C-terminus: MKVFKFIGLMILLTSAFSAGSGQSPMTVLCSIDWFMVTVHPFMLNNDVCVHFHELHLGLGCPPNHVQPHAYQFTYRVTECGIRAKAVSQDMVIYSTEIHYSSKGTPSKFVIPVSCAAPQKSPWLTKPCSMRVASKSRATAQKDEKCYEVFSLSQSSQRPNCDCPPCVFSEEEHTQVPCHQAGAQEAQPLQPSHFLDISEDWSLHTDDMIGSM.

The N-terminal stretch at 1 to 22 (MKVFKFIGLMILLTSAFSAGSG) is a signal peptide.

It belongs to the PLAC1 family. Expressed in placenta. Localizes primarily to differentiated syncytiotrophoblast throughout gestation as well as to a small population of villous cytotrophoblasts. Also detected in maternal blood and rapidly disappears following delivery, but is not detected in other adult or fetal tissues examined.

The protein localises to the secreted. In terms of biological role, may play a role in placental development. The polypeptide is Placenta-specific protein 1 (Homo sapiens (Human)).